Reading from the N-terminus, the 262-residue chain is Aminoglycoside (3'') (9) adenylyltransferase (262 aa).

The enzyme catalyses streptomycin + ATP = 3''-O-adenylylstreptomycin + diphosphate. The catalysed reaction is spectinomycin + ATP = 9-O-adenylylspectinomycin + diphosphate. Functionally, mediates bacterial resistance to the antibiotics streptomycin and spectinomycin. This Shigella flexneri protein is Aminoglycoside (3'') (9) adenylyltransferase.